The primary structure comprises 78 residues: Large ribosomal subunit protein bL28 (78 aa).

The protein belongs to the bacterial ribosomal protein bL28 family.

This is Large ribosomal subunit protein bL28 from Methylobacillus flagellatus (strain ATCC 51484 / DSM 6875 / VKM B-1610 / KT).